A 310-amino-acid chain; its full sequence is MPRLSEPSPYVEFDRKQWRALRKSTPLVLTEEELIGLRGLGEQIDLTEVAEVYLPLARLIHLQVAARQRLFAATATFLGDQHPDRLVPFVIGVAGSVAVGKSTTARVLQALLARWDHHPRVDLVTTDGFLYPNAELSRRNIMHRKGFPESYNRRGLLRFVTEVKSGAREVTAPVYSHLLYDIIKNEKHVVQQPDILILEGLNVLQTGPTLMVSDLFDFSIYVDARIEDIEQWYISRFLAMRSTSFANPSSHFHHYAKLSDKQATLAAQEIWHSINLPNLLENILPTRPRATLVLRKDADHSINRLRLRKL.

95–102 (GSVAVGKS) provides a ligand contact to ATP.

Belongs to the prokaryotic pantothenate kinase family.

The protein resides in the cytoplasm. It carries out the reaction (R)-pantothenate + ATP = (R)-4'-phosphopantothenate + ADP + H(+). The protein operates within cofactor biosynthesis; coenzyme A biosynthesis; CoA from (R)-pantothenate: step 1/5. The chain is Pantothenate kinase from Mycobacteroides abscessus (strain ATCC 19977 / DSM 44196 / CCUG 20993 / CIP 104536 / JCM 13569 / NCTC 13031 / TMC 1543 / L948) (Mycobacterium abscessus).